We begin with the raw amino-acid sequence, 72 residues long: Lantibiotic Flvbeta.e (72 aa).

Residues 1–34 (MNNKEFNMEQFKKLAAVVSEDELDEMLDENVTGA) constitute a propeptide, cleaved by FlvT. The lanthionine (Ser-Cys); by FlvM2 cross-link spans 36-40 (SSIPC). Ser-37 carries the post-translational modification 2,3-didehydroalanine (Ser); by FlvM2. 2,3-didehydrobutyrine; by FlvM2 occurs at positions 48 and 49. Cross-links (beta-methyllanthionine (Thr-Cys); by FlvM2) lie at residues 55-61 (TTGFDWC), 63-66 (TGAC), and 67-70 (TTSC).

Post-translationally, contains LL-lanthionine and DL-beta-methyllanthionine, when coepressed in E.coli with the flavecin synthetase FlvM2.

The protein resides in the secreted. Lanthionine-containing peptide antibiotic (lantibiotic) that is probably active on Gram-positive bacteria, since its analog [Del1]Flvbeta.e shows antibacterial activity against Gram-positive bacteria. This activity is not synergistically enhanced by [Del2]Flvalpha.a, an analog of Flvalpha.a, which is encoded by the same operon than Flvbeta.e. The bactericidal activity of lantibiotics is based on depolarization of energized bacterial cytoplasmic membranes, initiated by the formation of aqueous transmembrane pores. This is Lantibiotic Flvbeta.e from Ruminococcus flavefaciens.